Reading from the N-terminus, the 437-residue chain is tRNA-2-methylthio-N(6)-dimethylallyladenosine synthase (437 aa).

Residues 1 to 115 (MKVYIETMGC…ISQVIHKEKA (115 aa)) enclose the MTTase N-terminal domain. Positions 10, 46, 78, 148, 152, and 155 each coordinate [4Fe-4S] cluster. A Radical SAM core domain is found at 134–367 (KKAQIRSLLN…QNRHKEILEE (234 aa)). In terms of domain architecture, TRAM spans 370–436 (KLEVGKTHVV…KGRLIAAIKG (67 aa)).

This sequence belongs to the methylthiotransferase family. MiaB subfamily. As to quaternary structure, monomer. It depends on [4Fe-4S] cluster as a cofactor.

It is found in the cytoplasm. The catalysed reaction is N(6)-dimethylallyladenosine(37) in tRNA + (sulfur carrier)-SH + AH2 + 2 S-adenosyl-L-methionine = 2-methylsulfanyl-N(6)-dimethylallyladenosine(37) in tRNA + (sulfur carrier)-H + 5'-deoxyadenosine + L-methionine + A + S-adenosyl-L-homocysteine + 2 H(+). Catalyzes the methylthiolation of N6-(dimethylallyl)adenosine (i(6)A), leading to the formation of 2-methylthio-N6-(dimethylallyl)adenosine (ms(2)i(6)A) at position 37 in tRNAs that read codons beginning with uridine. The protein is tRNA-2-methylthio-N(6)-dimethylallyladenosine synthase of Helicobacter pylori (strain HPAG1).